The sequence spans 379 residues: Succinyl-diaminopimelate desuccinylase (379 aa).

Position 70 (H70) interacts with Zn(2+). D72 is a catalytic residue. D103 is a binding site for Zn(2+). E137 functions as the Proton acceptor in the catalytic mechanism. Zn(2+) contacts are provided by E138, E166, and H352.

It belongs to the peptidase M20A family. DapE subfamily. Homodimer. The cofactor is Zn(2+). Requires Co(2+) as cofactor.

It carries out the reaction N-succinyl-(2S,6S)-2,6-diaminopimelate + H2O = (2S,6S)-2,6-diaminopimelate + succinate. The protein operates within amino-acid biosynthesis; L-lysine biosynthesis via DAP pathway; LL-2,6-diaminopimelate from (S)-tetrahydrodipicolinate (succinylase route): step 3/3. Functionally, catalyzes the hydrolysis of N-succinyl-L,L-diaminopimelic acid (SDAP), forming succinate and LL-2,6-diaminopimelate (DAP), an intermediate involved in the bacterial biosynthesis of lysine and meso-diaminopimelic acid, an essential component of bacterial cell walls. The polypeptide is Succinyl-diaminopimelate desuccinylase (Burkholderia ambifaria (strain ATCC BAA-244 / DSM 16087 / CCUG 44356 / LMG 19182 / AMMD) (Burkholderia cepacia (strain AMMD))).